The primary structure comprises 148 residues: Gametocyte-specific factor 1-like (148 aa).

2 CHHC U11-48K-type zinc fingers span residues 6–33 (FEICPYDPHHRIPLSRFQYHLASCRRKN) and 40–67 (MATCKYNACHVVPIKNLEEHEAVCVNRS). Residues Cys9, His15, His25, Cys29, Cys43, His49, His59, and Cys63 each coordinate Zn(2+). The disordered stretch occupies residues 67-99 (SAVEEEDTENPLKVSPPSSEQNDDTQQVSPCLP). Residues 82-95 (PPSSEQNDDTQQVS) show a composition bias toward polar residues.

It belongs to the UPF0224 (FAM112) family.

This is Gametocyte-specific factor 1-like (GTSF1L) from Homo sapiens (Human).